The chain runs to 356 residues: A-type ATP synthase subunit C (356 aa).

It belongs to the V-ATPase V0D/AC39 subunit family. As to quaternary structure, has multiple subunits with at least A(3), B(3), C, D, E, F, H, I and proteolipid K(x).

The protein localises to the cell membrane. Its function is as follows. Component of the A-type ATP synthase that produces ATP from ADP in the presence of a proton gradient across the membrane. This Thermoplasma volcanium (strain ATCC 51530 / DSM 4299 / JCM 9571 / NBRC 15438 / GSS1) protein is A-type ATP synthase subunit C.